The following is an 889-amino-acid chain: Translation initiation factor IF-2 (889 aa).

The segment at 1-299 is disordered; it reads MTDNKDDKTL…EKFKRSQMQE (299 aa). Residues 61–76 are compositionally biased toward low complexity; the sequence is ITPVAATPAARPAEQR. The span at 77–93 shows a compositional bias: pro residues; it reads PMPPQPSGRPAPQPQPH. Residues 116 to 182 show a composition bias toward basic and acidic residues; the sequence is MEARRRALAE…EAEKTEEKVE (67 aa). The segment covering 196–215 has biased composition (low complexity); the sequence is RPQPGRAAPAATPAAPDGAA. The segment covering 220 to 231 has biased composition (basic and acidic residues); that stretch reads RGTESEEDERRR. One can recognise a tr-type G domain in the interval 387 to 554; sequence SRPPIVTIMG…AILLQSEILD (168 aa). The interval 396 to 403 is G1; sequence GHVDHGKT. 396–403 lines the GTP pocket; the sequence is GHVDHGKT. Residues 421–425 form a G2 region; it reads GITQH. The tract at residues 442–445 is G3; it reads DTPG. GTP contacts are provided by residues 442–446 and 496–499; these read DTPGH and NKID. The interval 496 to 499 is G4; it reads NKID. Residues 532-534 are G5; sequence SAK.

The protein belongs to the TRAFAC class translation factor GTPase superfamily. Classic translation factor GTPase family. IF-2 subfamily.

Its subcellular location is the cytoplasm. Functionally, one of the essential components for the initiation of protein synthesis. Protects formylmethionyl-tRNA from spontaneous hydrolysis and promotes its binding to the 30S ribosomal subunits. Also involved in the hydrolysis of GTP during the formation of the 70S ribosomal complex. In Rhizobium meliloti (strain 1021) (Ensifer meliloti), this protein is Translation initiation factor IF-2.